The chain runs to 75 residues: Exodeoxyribonuclease 7 small subunit (75 aa).

Belongs to the XseB family. Heterooligomer composed of large and small subunits.

Its subcellular location is the cytoplasm. The enzyme catalyses Exonucleolytic cleavage in either 5'- to 3'- or 3'- to 5'-direction to yield nucleoside 5'-phosphates.. Functionally, bidirectionally degrades single-stranded DNA into large acid-insoluble oligonucleotides, which are then degraded further into small acid-soluble oligonucleotides. The sequence is that of Exodeoxyribonuclease 7 small subunit from Elusimicrobium minutum (strain Pei191).